The chain runs to 68 residues: MDQFQALIEPARQFSKDSYRLVKRCTKPDRKEYQKIAMATAIGFAIMGFIGFFVKLIHIPINNIIVGA.

Residues 1–32 (MDQFQALIEPARQFSKDSYRLVKRCTKPDRKE) are Cytoplasmic-facing. A helical transmembrane segment spans residues 33-61 (YQKIAMATAIGFAIMGFIGFFVKLIHIPI). Over 62-68 (NNIIVGA) the chain is Extracellular.

This sequence belongs to the SecE/SEC61-gamma family. In terms of assembly, heterotrimeric complex composed of SEC61-alpha, SEC61-beta and SEC61-gamma. In terms of tissue distribution, expressed in the germline. Expression in the germline is regulated in a sex- and meiotic cycle stage-specific manner. Expressed in somatic tissues including the intestine and somatic gonad. Expressed in the intestine more highly in hermaprodites than in males. In hermaphrodites, weakly expressed in the spermatheca.

It localises to the endoplasmic reticulum membrane. Its function is as follows. Required for oocyte development and ovulation. Required for the translocation of secretory and transmembrane proteins into the endoplasmic reticulum in vitro. This is Protein transport protein Sec61 subunit gamma from Caenorhabditis elegans.